A 201-amino-acid polypeptide reads, in one-letter code: MESQFRPGFDVSQGAGGRASKFGDVVAPTSSTQLPGIILRIVAIVLTFISAVVMGAARQTTTVTGIDAETALLTSITVTVKSTYSAAYVYFVVANVLVFFYSVVSLVLSMVNKARLTSMSLPFSIADLLMVVLLFSSNGAAAAISVVAEKGQQNLAGWDKICNLFGGLCARVNAAIVLSMLASVAYVILVVFGMANLRRSQ.

Topologically, residues 1–36 are cytoplasmic; sequence MESQFRPGFDVSQGAGGRASKFGDVVAPTSSTQLPG. Residues 37–57 traverse the membrane as a helical segment; the sequence is IILRIVAIVLTFISAVVMGAA. At 58-87 the chain is on the extracellular side; sequence RQTTTVTGIDAETALLTSITVTVKSTYSAA. The helical transmembrane segment at 88-108 threads the bilayer; the sequence is YVYFVVANVLVFFYSVVSLVL. The Cytoplasmic portion of the chain corresponds to 109-127; that stretch reads SMVNKARLTSMSLPFSIAD. Residues 128-148 form a helical membrane-spanning segment; the sequence is LLMVVLLFSSNGAAAAISVVA. At 149–173 the chain is on the extracellular side; it reads EKGQQNLAGWDKICNLFGGLCARVN. A helical membrane pass occupies residues 174–194; it reads AAIVLSMLASVAYVILVVFGM. Over 195–201 the chain is Cytoplasmic; the sequence is ANLRRSQ.

The protein belongs to the Casparian strip membrane proteins (CASP) family. In terms of assembly, homodimer and heterodimers.

The protein resides in the cell membrane. In Musa acuminata (Banana), this protein is CASP-like protein 1E1.